The chain runs to 479 residues: Nuclear receptor subfamily 6 group A member 1 (479 aa).

A disordered region spans residues 1 to 32 (MERDERPPSGGGGGGGSAGFLEPPAALPPPPR). Over residues 9-18 (SGGGGGGGSA) the composition is skewed to gly residues. Residues 57–132 (QRTCLICGDR…MGMNRKAIRE (76 aa)) constitute a DNA-binding region (nuclear receptor). Zn(2+) is bound by residues C60, C63, C77, C80, C96, C102, C112, and C115. NR C4-type zinc fingers lie at residues 60 to 80 (CLICGDRATGLHYGIISCEGC) and 96 to 120 (CSRDKNCVMSRKQRNRCQYCRLLKC). Disordered regions lie at residues 131–150 (REDGMPGGRNKSIGPVQISE) and 162–198 (FEEEANHWSNHGDSDHSSPGNRASESNQPSPGSTLSS). Residues 165 to 177 (EANHWSNHGDSDH) are compositionally biased toward basic and acidic residues. A sufficient for interaction with UIMC1 region spans residues 172 to 252 (HGDSDHSSPG…RSLDPQSYSL (81 aa)). Polar residues predominate over residues 178–198 (SSPGNRASESNQPSPGSTLSS). In terms of domain architecture, NR LBD spans 248–479 (QSYSLIHQLV…HSCKTSVGKE (232 aa)).

This sequence belongs to the nuclear hormone receptor family. NR6 subfamily. In terms of assembly, homodimer. Interacts with UIMC1.

The protein localises to the nucleus. Orphan nuclear receptor that binds to a response element containing the sequence 5'-TCAAGGTCA-3'. Acts as a regulator of embryonic stem cell pluripotency by mediating repression of POU5F1/OCT4: binds to the DR0 element within the POU5F1/OCT4 promoter and inhibits POU5F1/OCT4 expression during embryonic stem cell differentiation. Involved in the regulation of gene expression in germ cell development during gametogenesis. This is Nuclear receptor subfamily 6 group A member 1 (NR6A1) from Sus scrofa (Pig).